The following is a 289-amino-acid chain: Oxaloacetate decarboxylase (289 aa).

Ser-50 is a substrate binding site. Asp-88 lines the Mg(2+) pocket. Substrate is bound by residues Arg-159 and His-235.

This sequence belongs to the isocitrate lyase/PEP mutase superfamily. Oxaloacetate decarboxylase family. In terms of assembly, homotetramer; dimer of dimers. Requires Mg(2+) as cofactor.

The enzyme catalyses oxaloacetate + H(+) = pyruvate + CO2. Catalyzes the decarboxylation of oxaloacetate into pyruvate. Seems to play a role in maintaining cellular concentrations of bicarbonate and pyruvate. This is Oxaloacetate decarboxylase from Pseudomonas putida (strain ATCC 47054 / DSM 6125 / CFBP 8728 / NCIMB 11950 / KT2440).